A 216-amino-acid chain; its full sequence is MOB kinase activator 3B (216 aa).

Residues Cys82, Cys87, His164, and His169 each coordinate Zn(2+).

It belongs to the MOB1/phocein family.

Modulates LATS1 expression in the Hippo signaling pathway which plays a pivotal role in organ size control and tumor suppression by restricting proliferation and promoting apoptosis. This chain is MOB kinase activator 3B, found in Homo sapiens (Human).